A 244-amino-acid chain; its full sequence is PF03932 family protein CutC (244 aa).

It belongs to the CutC family.

It is found in the cytoplasm. This is PF03932 family protein CutC from Pasteurella multocida (strain Pm70).